Here is a 237-residue protein sequence, read N- to C-terminus: UDP-2,3-diacylglucosamine hydrolase (237 aa).

Mn(2+) is bound by residues Asp9, His11, Asp42, Asn80, and His115. 80–81 contacts substrate; that stretch reads NR. Substrate-binding residues include Asp123, Ser161, Lys165, Lys168, and His196. Positions 196 and 198 each coordinate Mn(2+).

Belongs to the LpxH family. Requires Mn(2+) as cofactor.

It localises to the cell inner membrane. It carries out the reaction UDP-2-N,3-O-bis[(3R)-3-hydroxytetradecanoyl]-alpha-D-glucosamine + H2O = 2-N,3-O-bis[(3R)-3-hydroxytetradecanoyl]-alpha-D-glucosaminyl 1-phosphate + UMP + 2 H(+). Its pathway is glycolipid biosynthesis; lipid IV(A) biosynthesis; lipid IV(A) from (3R)-3-hydroxytetradecanoyl-[acyl-carrier-protein] and UDP-N-acetyl-alpha-D-glucosamine: step 4/6. Functionally, hydrolyzes the pyrophosphate bond of UDP-2,3-diacylglucosamine to yield 2,3-diacylglucosamine 1-phosphate (lipid X) and UMP by catalyzing the attack of water at the alpha-P atom. Involved in the biosynthesis of lipid A, a phosphorylated glycolipid that anchors the lipopolysaccharide to the outer membrane of the cell. This chain is UDP-2,3-diacylglucosamine hydrolase, found in Haemophilus influenzae (strain PittGG).